Consider the following 429-residue polypeptide: MANVTVIGAQWGDEGKGKIVDWLADRADAVVRFQGGHNAGHTLVVDGTTYKLSLLPSGIVSGTLSIIGNGVVLDPWALKQEVEKLEGQGVTINDDNFAIADNCPLILPIHRDLDGLREAAAGTGKIGTTGRGIGPAYEDKVGRRAIRVCDLEHLDSLEPQLDRLCAHHDALRAGFEEPPVDRERLLGDLREIAPFVLRFAQPVWKRLKKVRKAGAKILFEGAQGVLLDVDHGTYPFVTSSNTVSGTAASGSGLGPGAAGFVLGIVKAYTTRVGSGPFPTELDDEIGQRLGERGHEFGTVTGRQRRVGWFDAVLVRQTCAISGVTGIALTKIDVLDGLDTVKICTGYRLNNNVYDYLPSHAASQAAVEPIYEEMEGWSESTAGARSFADLPANAVKYIQRIQELIECPVALVSTSPERDDTILMRDPFMD.

GTP is bound by residues 12-18 (GDEGKGK) and 40-42 (GHT). D13 (proton acceptor) is an active-site residue. Residues D13 and G40 each coordinate Mg(2+). IMP contacts are provided by residues 13–16 (DEGK), 38–41 (NAGH), T129, R143, Q223, T238, and R302. Residue H41 is the Proton donor of the active site. A substrate-binding site is contributed by 298-304 (TVTGRQR). GTP-binding positions include R304, 330–332 (KID), and 412–414 (STS).

This sequence belongs to the adenylosuccinate synthetase family. Homodimer. The cofactor is Mg(2+).

It localises to the cytoplasm. It carries out the reaction IMP + L-aspartate + GTP = N(6)-(1,2-dicarboxyethyl)-AMP + GDP + phosphate + 2 H(+). Its pathway is purine metabolism; AMP biosynthesis via de novo pathway; AMP from IMP: step 1/2. Functionally, plays an important role in the de novo pathway of purine nucleotide biosynthesis. Catalyzes the first committed step in the biosynthesis of AMP from IMP. The chain is Adenylosuccinate synthetase from Erythrobacter litoralis (strain HTCC2594).